Here is a 411-residue protein sequence, read N- to C-terminus: 2,3-bisphosphoglycerate-independent phosphoglycerate mutase (411 aa).

The protein belongs to the BPG-independent phosphoglycerate mutase family. A-PGAM subfamily.

It catalyses the reaction (2R)-2-phosphoglycerate = (2R)-3-phosphoglycerate. It participates in carbohydrate degradation; glycolysis; pyruvate from D-glyceraldehyde 3-phosphate: step 3/5. Catalyzes the interconversion of 2-phosphoglycerate and 3-phosphoglycerate. This Thermococcus kodakarensis (strain ATCC BAA-918 / JCM 12380 / KOD1) (Pyrococcus kodakaraensis (strain KOD1)) protein is 2,3-bisphosphoglycerate-independent phosphoglycerate mutase.